Here is a 468-residue protein sequence, read N- to C-terminus: Cysteine--tRNA ligase (468 aa).

Zn(2+) is bound at residue cysteine 33. The 'HIGH' region signature appears at 35-45 (ATVQGLPHIGH). Residues cysteine 211, histidine 236, and glutamate 240 each contribute to the Zn(2+) site. Residues 267-271 (KMSKS) carry the 'KMSKS' region motif. Lysine 270 provides a ligand contact to ATP.

Belongs to the class-I aminoacyl-tRNA synthetase family. In terms of assembly, monomer. The cofactor is Zn(2+).

The protein resides in the cytoplasm. It catalyses the reaction tRNA(Cys) + L-cysteine + ATP = L-cysteinyl-tRNA(Cys) + AMP + diphosphate. In Mycobacterium ulcerans (strain Agy99), this protein is Cysteine--tRNA ligase.